Consider the following 195-residue polypeptide: HTH-type transcriptional regulator BetI (195 aa).

Residues 8 to 68 enclose the HTH tetR-type domain; sequence EIRRAQLIDA…ATMRHVLRDL (61 aa). Positions 31–50 form a DNA-binding region, H-T-H motif; that stretch reads TLASVAQRANISTGIVSHYF.

Its pathway is amine and polyamine biosynthesis; betaine biosynthesis via choline pathway [regulation]. Functionally, repressor involved in the biosynthesis of the osmoprotectant glycine betaine. It represses transcription of the choline transporter BetT and the genes of BetAB involved in the synthesis of glycine betaine. This chain is HTH-type transcriptional regulator BetI, found in Burkholderia mallei (strain NCTC 10247).